We begin with the raw amino-acid sequence, 208 residues long: Imidazole glycerol phosphate synthase subunit HisH (208 aa).

The Glutamine amidotransferase type-1 domain occupies 1-206; that stretch reads MIVIIDYDTG…KEVTYSCKSS (206 aa). Cysteine 79 functions as the Nucleophile in the catalytic mechanism. Catalysis depends on residues histidine 181 and glutamate 183.

Heterodimer of HisH and HisF.

The protein localises to the cytoplasm. It carries out the reaction 5-[(5-phospho-1-deoxy-D-ribulos-1-ylimino)methylamino]-1-(5-phospho-beta-D-ribosyl)imidazole-4-carboxamide + L-glutamine = D-erythro-1-(imidazol-4-yl)glycerol 3-phosphate + 5-amino-1-(5-phospho-beta-D-ribosyl)imidazole-4-carboxamide + L-glutamate + H(+). It catalyses the reaction L-glutamine + H2O = L-glutamate + NH4(+). Its pathway is amino-acid biosynthesis; L-histidine biosynthesis; L-histidine from 5-phospho-alpha-D-ribose 1-diphosphate: step 5/9. Functionally, IGPS catalyzes the conversion of PRFAR and glutamine to IGP, AICAR and glutamate. The HisH subunit catalyzes the hydrolysis of glutamine to glutamate and ammonia as part of the synthesis of IGP and AICAR. The resulting ammonia molecule is channeled to the active site of HisF. The polypeptide is Imidazole glycerol phosphate synthase subunit HisH (Listeria monocytogenes serotype 4a (strain HCC23)).